The chain runs to 71 residues: ATP synthase F(0) complex subunit e, mitochondrial (71 aa).

The residue at position 34 (Lys34) is an N6-acetyllysine. Ser68 carries the post-translational modification Phosphoserine.

This sequence belongs to the ATPase e subunit family. As to quaternary structure, component of the ATP synthase complex composed at least of ATP5F1A/subunit alpha, ATP5F1B/subunit beta, ATP5MC1/subunit c (homooctomer), MT-ATP6/subunit a, MT-ATP8/subunit 8, ATP5ME/subunit e, ATP5MF/subunit f, ATP5MG/subunit g, ATP5MK/subunit k, ATP5MJ/subunit j, ATP5F1C/subunit gamma, ATP5F1D/subunit delta, ATP5F1E/subunit epsilon, ATP5PF/subunit F6, ATP5PB/subunit b, ATP5PD/subunit d, ATP5PO/subunit OSCP. ATP synthase complex consists of a soluble F(1) head domain (subunits alpha(3) and beta(3)) - the catalytic core - and a membrane F(0) domain - the membrane proton channel (subunits c, a, 8, e, f, g, k and j). These two domains are linked by a central stalk (subunits gamma, delta, and epsilon) rotating inside the F1 region and a stationary peripheral stalk (subunits F6, b, d, and OSCP).

The protein resides in the mitochondrion. The protein localises to the mitochondrion inner membrane. Its function is as follows. Subunit e, of the mitochondrial membrane ATP synthase complex (F(1)F(0) ATP synthase or Complex V) that produces ATP from ADP in the presence of a proton gradient across the membrane which is generated by electron transport complexes of the respiratory chain. ATP synthase complex consist of a soluble F(1) head domain - the catalytic core - and a membrane F(1) domain - the membrane proton channel. These two domains are linked by a central stalk rotating inside the F(1) region and a stationary peripheral stalk. During catalysis, ATP synthesis in the catalytic domain of F(1) is coupled via a rotary mechanism of the central stalk subunits to proton translocation. In vivo, can only synthesize ATP although its ATP hydrolase activity can be activated artificially in vitro. Part of the complex F(0) domain. The sequence is that of ATP synthase F(0) complex subunit e, mitochondrial from Rattus norvegicus (Rat).